The sequence spans 193 residues: Rho-related GTP-binding protein RhoA-A (193 aa).

GTP contacts are provided by residues 12 to 19 (GDGACGKT), 30 to 37 (FPEVYVPT), 59 to 63 (DTAGQ), 117 to 120 (NKKD), and 160 to 162 (SAK). Residue Tyr-34 is glycosylated ((Microbial infection) O-linked (GlcNAc) tyrosine; by Yersinia Afp18). Cys-190 is modified (cysteine methyl ester). The S-geranylgeranyl cysteine moiety is linked to residue Cys-190. Positions 191-193 (ALL) are cleaved as a propeptide — removed in mature form.

Belongs to the small GTPase superfamily. Rho family. In terms of processing, (Microbial infection) Glycosylated at Tyr-34 by Yersinia ruckeri toxin Afp18. Mono-O-GlcNAcylation by Afp18 inhibits RhoA activation by guanine nucleotide exchange factors and blocks RhoA signaling.

Its subcellular location is the cell membrane. In terms of biological role, regulates a signal transduction pathway linking plasma membrane receptors to the assembly of focal adhesions and actin stress fibers. The polypeptide is Rho-related GTP-binding protein RhoA-A (Danio rerio (Zebrafish)).